The chain runs to 134 residues: Putative cytochrome c oxidase subunit 6b-like (134 aa).

The segment at 1-61 is disordered; the sequence is MSSAQMDPHD…DSGRETDAAV (61 aa). 2 stretches are compositionally biased toward basic and acidic residues: residues 7–19 and 44–61; these read DPHD…DISK and ATFR…DAAV. In terms of domain architecture, CHCH spans 71-114; that stretch reads TRHCFNRFMQYHKCIEKNGRDANDCNNLRDYVRSICPEELVSKI. The Cx9C motif motif lies at 74-84; sequence CFNRFMQYHKC. 2 disulfide bridges follow: Cys-74-Cys-106 and Cys-84-Cys-95. The Cx10C motif motif lies at 95 to 106; that stretch reads CNNLRDYVRSIC.

Belongs to the cytochrome c oxidase subunit 6B (TC 3.D.4.8) family.

It is found in the mitochondrion. In terms of biological role, this protein is one of the nuclear-coded polypeptide chains of cytochrome c oxidase, the terminal oxidase in mitochondrial electron transport. This protein may be one of the heme-binding subunits of the oxidase. This Arabidopsis thaliana (Mouse-ear cress) protein is Putative cytochrome c oxidase subunit 6b-like.